A 240-amino-acid polypeptide reads, in one-letter code: MRYGLSAQRSLINVCSRRFFGKDAKEQFLKNLSSIPASKHPRLVSDSDANSAMSVLIPLVTVDGRDSVLLTKRSIHLRSHRGEVCFPGGRMDPGETTTETALRETFEEIGVNAESVEIWGHLKSVIRRQADFNVTPIVGYISDERVLENLVVNSDEVQAVFTIPIDELIKKAGLTKFQSKRMKYTLPSFDSTEFKVHHNAPNEYLHSTQRVWGLSGVMLHQALTLLNPDVYKHDLIVKFF.

The region spanning 50–190 is the Nudix hydrolase domain; the sequence is NSAMSVLIPL…RMKYTLPSFD (141 aa). Positions 89–110 match the Nudix box motif; the sequence is GRMDPGETTTETALRETFEEIG. Mg(2+) is bound by residues E104 and E108.

The protein belongs to the Nudix hydrolase family. PCD1 subfamily. It depends on Mn(2+) as a cofactor. Mg(2+) serves as cofactor.

Probably mediates the hydrolysis of some nucleoside diphosphate derivatives. This is Nudix hydrolase 3 (ndx-3) from Caenorhabditis elegans.